The following is a 158-amino-acid chain: C-type lectin BfL-1 (158 aa).

The first 21 residues, 1 to 21 (MGHFTFIGLCLLAMFLSLSGA), serve as a signal peptide directing secretion. Disulfide bonds link Cys26–Cys37, Cys54–Cys154, Cys61–Cys156, and Cys129–Cys146. One can recognise a C-type lectin domain in the interval 33 to 155 (KNGLCYKVFS…CAALRPFLCQ (123 aa)). Ca(2+) contacts are provided by Gln119, Asp121, and Glu127. The short motif at 119 to 121 (QPD) is the Galactose-binding element. Residue Asn134 is glycosylated (N-linked (GlcNAc...) asparagine). The Ca(2+) site is built by Asn142 and Asp143.

It belongs to the true venom lectin family. In terms of assembly, homodimer; non-covalently linked. As to expression, expressed by the venom gland.

The protein resides in the secreted. Galactose-binding lectin which recognizes specific carbohydrate structures and agglutinates a variety of animal cells by binding to cell-surface glycoproteins and glycolipids. May be a calcium-dependent lectin. The polypeptide is C-type lectin BfL-1 (Bungarus fasciatus (Banded krait)).